The following is a 443-amino-acid chain: Probable lipase C16A3.12c (443 aa).

The Cytoplasmic portion of the chain corresponds to 1-16; sequence MSGFNKNQIYWGDYVG. The helical; Signal-anchor for type II membrane protein transmembrane segment at 17 to 37 threads the bilayer; it reads VIAAFVGVYTELVARIFIYMI. The Lumenal segment spans residues 38 to 443; it reads PERVREWFRV…KHFVKQNGFH (406 aa). One can recognise an AB hydrolase-1 domain in the interval 116–410; that stretch reads VVYCHHGLMT…HYEHLDFLWG (295 aa). Asn134 and Asn177 each carry an N-linked (GlcNAc...) asparagine glycan. Ser210 acts as the Nucleophile in catalysis. N-linked (GlcNAc...) asparagine glycosylation is found at Asn304 and Asn335. Residues Asp378 and His404 each act as charge relay system in the active site.

The protein belongs to the AB hydrolase superfamily. Lipase family.

It is found in the cytoplasm. It localises to the vacuole. The protein resides in the membrane. Functionally, probable lipase. The polypeptide is Probable lipase C16A3.12c (Schizosaccharomyces pombe (strain 972 / ATCC 24843) (Fission yeast)).